Consider the following 670-residue polypeptide: Methionine--tRNA ligase (670 aa).

The short motif at 14–24 (PYANGHLHLGH) is the 'HIGH' region element. Zn(2+) is bound by residues Cys145, Cys148, Cys158, and Cys161. The short motif at 330–334 (KMSKS) is the 'KMSKS' region element. Residue Lys333 participates in ATP binding. The tRNA-binding domain maps to 570-670 (DFAKVDLRIA…AGAFPGMKVK (101 aa)).

Belongs to the class-I aminoacyl-tRNA synthetase family. MetG type 1 subfamily. In terms of assembly, homodimer. Zn(2+) serves as cofactor.

It is found in the cytoplasm. It catalyses the reaction tRNA(Met) + L-methionine + ATP = L-methionyl-tRNA(Met) + AMP + diphosphate. Is required not only for elongation of protein synthesis but also for the initiation of all mRNA translation through initiator tRNA(fMet) aminoacylation. The polypeptide is Methionine--tRNA ligase (Legionella pneumophila (strain Corby)).